Consider the following 286-residue polypeptide: Acetyl-coenzyme A carboxylase carboxyl transferase subunit beta (286 aa).

The CoA carboxyltransferase N-terminal domain maps to 26–286 (LWEKCVKCDA…LAKFTRRAAV (261 aa)). 4 residues coordinate Zn(2+): C30, C33, C49, and C52. The C4-type zinc-finger motif lies at 30–52 (CVKCDAVLYKPELEKNLDVCPKC).

It belongs to the AccD/PCCB family. In terms of assembly, acetyl-CoA carboxylase is a heterohexamer composed of biotin carboxyl carrier protein (AccB), biotin carboxylase (AccC) and two subunits each of ACCase subunit alpha (AccA) and ACCase subunit beta (AccD). It depends on Zn(2+) as a cofactor.

The protein resides in the cytoplasm. It catalyses the reaction N(6)-carboxybiotinyl-L-lysyl-[protein] + acetyl-CoA = N(6)-biotinyl-L-lysyl-[protein] + malonyl-CoA. It functions in the pathway lipid metabolism; malonyl-CoA biosynthesis; malonyl-CoA from acetyl-CoA: step 1/1. Its function is as follows. Component of the acetyl coenzyme A carboxylase (ACC) complex. Biotin carboxylase (BC) catalyzes the carboxylation of biotin on its carrier protein (BCCP) and then the CO(2) group is transferred by the transcarboxylase to acetyl-CoA to form malonyl-CoA. This is Acetyl-coenzyme A carboxylase carboxyl transferase subunit beta from Cellvibrio japonicus (strain Ueda107) (Pseudomonas fluorescens subsp. cellulosa).